The chain runs to 132 residues: Large ribosomal subunit protein uL14 (132 aa).

The protein belongs to the universal ribosomal protein uL14 family. Part of the 50S ribosomal subunit. Forms a cluster with proteins L3 and L24e, part of which may contact the 16S rRNA in 2 intersubunit bridges.

Its function is as follows. Binds to 23S rRNA. Forms part of two intersubunit bridges in the 70S ribosome. This is Large ribosomal subunit protein uL14 from Methanocorpusculum labreanum (strain ATCC 43576 / DSM 4855 / Z).